The sequence spans 258 residues: 5'-nucleotidase SurE (258 aa).

4 residues coordinate a divalent metal cation: D10, D11, S41, and N96.

Belongs to the SurE nucleotidase family. It depends on a divalent metal cation as a cofactor.

It is found in the cytoplasm. The enzyme catalyses a ribonucleoside 5'-phosphate + H2O = a ribonucleoside + phosphate. Nucleotidase that shows phosphatase activity on nucleoside 5'-monophosphates. The polypeptide is 5'-nucleotidase SurE (Sorangium cellulosum (strain So ce56) (Polyangium cellulosum (strain So ce56))).